A 559-amino-acid chain; its full sequence is Glucose-6-phosphate isomerase (559 aa).

E363 acts as the Proton donor in catalysis. Catalysis depends on residues H394 and K523.

Belongs to the GPI family.

Its subcellular location is the cytoplasm. The enzyme catalyses alpha-D-glucose 6-phosphate = beta-D-fructose 6-phosphate. It functions in the pathway carbohydrate biosynthesis; gluconeogenesis. Its pathway is carbohydrate degradation; glycolysis; D-glyceraldehyde 3-phosphate and glycerone phosphate from D-glucose: step 2/4. Catalyzes the reversible isomerization of glucose-6-phosphate to fructose-6-phosphate. This Bartonella henselae (strain ATCC 49882 / DSM 28221 / CCUG 30454 / Houston 1) (Rochalimaea henselae) protein is Glucose-6-phosphate isomerase.